Reading from the N-terminus, the 562-residue chain is Non-homologous end joining factor IFFO1 (562 aa).

An LMNA binding region spans residues 65–116 (ALRNDLGSNINVLKTLNLRFRCFLAKVHELERRNRLLEKQLQQALEEGKQGR). One can recognise an IF rod domain in the interval 73–529 (NINVLKTLNL…RLITQSGDRK (457 aa)). Residues 85–117 (RCFLAKVHELERRNRLLEKQLQQALEEGKQGRR) adopt a coiled-coil conformation. A disordered region spans residues 154 to 187 (RVLGSPSRSPAGPLASSAACHTSSSTSTSTAFSS). Residues 168-187 (ASSAACHTSSSTSTSTAFSS) are compositionally biased toward low complexity. Positions 237–301 (EIRALYNVLA…MKVEQLKAEL (65 aa)) form a coiled coil. Residues 364 to 401 (MGGRKRERKAAVEEDTSLSESDGPRQPEGAEEESTALS) form a disordered region. Positions 453-528 (EQEDSLEKVI…RRLITQSGDR (76 aa)) are XCCR4 binding. Required for localization to the double-strand breaks (DSBs). Residues 458-504 (LEKVIKDTESLFKTREKEYQETIDQIELELATAKNDMNRHLHEYMEM) are a coiled coil. A disordered region spans residues 523 to 562 (TQSGDRKSPAFTAVPLSDPPPPPSETEDSDRDVSSDSSMR). Positions 553 to 562 (RDVSSDSSMR) are enriched in basic and acidic residues.

The protein belongs to the intermediate filament family. In terms of assembly, forms a heterotetramer with XRCC4. The interaction with XRCC4 is direct, involves LIG4-free XRCC4 and leads to relocalization of IFFO1 at the double-strand break (DSB) sites. Interacts with LMNA; the interaction forms an interior nucleoskeleton and the recruitment to DNA double-strand breaks.

Its subcellular location is the nucleus. The protein localises to the nucleoplasm. It localises to the nucleus inner membrane. The protein resides in the nucleus matrix. Its function is as follows. Nuclear matrix protein involved in the immobilization of broken DNA ends and the suppression of chromosome translocation during DNA double-strand breaks (DSBs). Interacts with the nuclear lamina component LMNA, resulting in the formation of a nucleoskeleton that will relocalize to the DSB sites in a XRCC4-dependent manner and promote the immobilization of the broken ends, thereby preventing chromosome translocation. Acts as a scaffold that allows the DNA repair protein XRCC4 and LMNA to assemble into a complex at the DSB sites. This Mus musculus (Mouse) protein is Non-homologous end joining factor IFFO1.